We begin with the raw amino-acid sequence, 402 residues long: Putative epoxide hydrolase AFT8 (402 aa).

This sequence belongs to the peptidase S33 family.

It functions in the pathway mycotoxin biosynthesis. Putative epoxide hydrolase; part of the gene clusters that mediate the biosynthesis of the host-selective toxins (HSTs) AF-toxins responsible for Alternaria black spot of strawberry disease by the strawberry pathotype. AF-toxin I and III are valine derivatives of 2,3-dyhydroxy-isovaleric acid and 2-hydroxy-isovaleric acid respectively, while AF II is an isoleucine derivative of 2-hydroxy-valeric acid. These derivatives are bound to a 9,10-epoxy-8-hydroxy-9-methyl-decatrienoic acid (EDA) moiety. On cellular level, AF-toxins affect plasma membrane of susceptible cells and cause a sudden increase in loss of K(+) after a few minutes of toxin treatment. The aldo-keto reductase AFTS1 catalyzes the conversion of 2-keto-isovaleric acid (2-KIV) to 2-hydroxy-isovaleric acid (2-HIV) by reduction of its ketone to an alcohol. The acyl-CoA ligase AFT1, the hydrolase AFT2 and the enoyl-CoA hydratases AFT3 and AFT6, but also the polyketide synthase AFT9, the acyl-CoA dehydrogenase AFT10, the cytochrome P450 monooxygenase AFT11 and the oxidoreductase AFT12 are all involved in the biosynthesis of the AK-, AF- and ACT-toxin common EDA structural moiety. The exact function of each enzyme, and of additional enzymes identified within the AF-toxin clusters have still to be determined. This is Putative epoxide hydrolase AFT8 from Alternaria alternata (Alternaria rot fungus).